Here is a 611-residue protein sequence, read N- to C-terminus: Leukotriene A-4 hydrolase (611 aa).

Lysine 73 carries the post-translational modification N6-acetyllysine. Residues 135–137 and 267–272 contribute to the a peptide site; these read QCQ and PYGGME. A Zn(2+)-binding site is contributed by histidine 296. The active-site Proton acceptor is glutamate 297. Zn(2+)-binding residues include histidine 300 and glutamate 319. Lysine 337 is subject to N6-acetyllysine. Tyrosine 384 serves as the catalytic Proton donor. A Phosphoserine modification is found at serine 416. Residue 564-566 coordinates a peptide; that stretch reads RMK. The residue at position 573 (lysine 573) is an N6-acetyllysine.

The protein belongs to the peptidase M1 family. Requires Zn(2+) as cofactor. In terms of processing, phosphorylation at Ser-416 inhibits enzymatic activity.

The protein localises to the cytoplasm. It carries out the reaction leukotriene A4 + H2O = leukotriene B4. Its pathway is lipid metabolism; leukotriene B4 biosynthesis. Inhibited by bestatin. Subject to suicide inhibition by leukotriene A4. In terms of biological role, epoxide hydrolase that catalyzes the final step in the biosynthesis of the pro-inflammatory mediator leukotriene B4. Also has aminopeptidase activity. The protein is Leukotriene A-4 hydrolase (LTA4H) of Chinchilla lanigera (Long-tailed chinchilla).